The chain runs to 149 residues: Proline-rich acidic protein 1 (149 aa).

The N-terminal stretch at 1–20 (MKRFLLATCLVAALLWEAGA) is a signal peptide. Disordered stretches follow at residues 51–79 (EPLE…KRPD) and 97–122 (LQGP…EVPQ). Residues 66–79 (PKQKPAAAEEKRPD) are compositionally biased toward basic and acidic residues.

In terms of assembly, interacts with MTTP. Interacts with MAD1L1. As to expression, predominantly expressed in the intestinal epithelial cells than in the liver (at protein level). Abundantly expressed in the uterus during late pregnancy by uterus epithelial cells. After birth expression rapidly decreases and is no longer found in the uterus by the third day. Also highly expressed in the small intestine where it shows a proximal-distal graded expression.

The protein resides in the secreted. The protein localises to the endoplasmic reticulum. Lipid-binding protein which promotes lipid absorption by facilitating MTTP-mediated lipid transfer (mainly triglycerides and phospholipids) and MTTP-mediated apoB lipoprotein assembly and secretion. Protects the gastrointestinal epithelium from irradiation-induced apoptosis. May play an important role in maintaining normal growth homeostasis in epithelial cells. Involved in p53/TP53-dependent cell survival after DNA damage. The chain is Proline-rich acidic protein 1 (Prap1) from Mus musculus (Mouse).